Consider the following 409-residue polypeptide: Glycogenin (409 aa).

3 residues coordinate UDP: L8, Y14, and R80. L8, Y14, R80, K89, D105, D107, N140, S141, D169, D172, and Q173 together coordinate UDP-alpha-D-glucose. Residues D105 and D107 each coordinate UDP. Mn(2+) contacts are provided by D105 and D107. O-linked (Glc...) tyrosine glycosylation occurs at Y212. UDP is bound by residues H229, G232, and K235. A Mn(2+)-binding site is contributed by H229. 2 residues coordinate UDP-alpha-D-glucose: G232 and K235. Residues 283–303 (RIEEDSHETEEKVDEEVSISE) form a disordered region.

It belongs to the glycosyltransferase 8 family. Glycogenin subfamily. It depends on Mn(2+) as a cofactor.

It is found in the cytoplasm. The protein resides in the vacuole. The catalysed reaction is L-tyrosyl-[glycogenin] + UDP-alpha-D-glucose = alpha-D-glucosyl-L-tyrosyl-[glycogenin] + UDP + H(+). It catalyses the reaction [1,4-alpha-D-glucosyl](n)-L-tyrosyl-[glycogenin] + UDP-alpha-D-glucose = [1,4-alpha-D-glucosyl](n+1)-L-tyrosyl-[glycogenin] + UDP + H(+). Its function is as follows. Glycogenin participates in the glycogen biosynthetic process along with glycogen synthase and glycogen branching enzyme. It catalyzes the formation of a short alpha (1,4)-glucosyl chain covalently attached via a glucose 1-O-tyrosyl linkage to internal tyrosine residues and these chains act as primers for the elongation reaction catalyzed by glycogen synthase. The sequence is that of Glycogenin from Komagataella phaffii (strain GS115 / ATCC 20864) (Yeast).